A 395-amino-acid chain; its full sequence is S-adenosylmethionine synthase 2 (395 aa).

A Mg(2+)-binding site is contributed by Glu-9. Position 15 (His-15) interacts with ATP. Glu-43 contributes to the K(+) binding site. L-methionine contacts are provided by Glu-56 and Gln-99. Residues 167-169, 235-238, Asp-246, 252-253, Ala-269, Lys-273, and Lys-277 each bind ATP; these read DGK, SGRF, and RK. Asp-246 provides a ligand contact to L-methionine. Position 277 (Lys-277) interacts with L-methionine.

This sequence belongs to the AdoMet synthase family. As to quaternary structure, homotetramer. Mn(2+) serves as cofactor. The cofactor is Mg(2+). Requires Co(2+) as cofactor. It depends on K(+) as a cofactor.

The protein resides in the cytoplasm. The catalysed reaction is L-methionine + ATP + H2O = S-adenosyl-L-methionine + phosphate + diphosphate. It participates in amino-acid biosynthesis; S-adenosyl-L-methionine biosynthesis; S-adenosyl-L-methionine from L-methionine: step 1/1. Functionally, catalyzes the formation of S-adenosylmethionine from methionine and ATP. The reaction comprises two steps that are both catalyzed by the same enzyme: formation of S-adenosylmethionine (AdoMet) and triphosphate, and subsequent hydrolysis of the triphosphate. The polypeptide is S-adenosylmethionine synthase 2 (METK2) (Suaeda salsa (Seepweed)).